The primary structure comprises 665 residues: Cinnamate reductase (665 aa).

Residue Q109 participates in FMN binding. Y182 serves as the catalytic Proton donor. FMN contacts are provided by residues R230, R319, and 341–342 (GR). C365, C368, C372, and C384 together coordinate [4Fe-4S] cluster. 5 residues coordinate FAD: A415, E434, N442, K452, and A479.

This sequence in the N-terminal section; belongs to the NADH:flavin oxidoreductase/NADH oxidase family. It depends on FMN as a cofactor. FAD is required as a cofactor. [4Fe-4S] cluster serves as cofactor.

It carries out the reaction 3-phenylpropanoate + NAD(+) = (E)-cinnamate + NADH + H(+). It functions in the pathway amino-acid degradation; L-phenylalanine degradation. In terms of biological role, involved in the fermentation of L-phenylalanine via a Stickland reaction. Catalyzes the reduction of (E)-cinnamate to yield 3-phenylpropionate. In Clostridium sporogenes (strain ATCC 7955 / DSM 767 / NBRC 16411 / NCIMB 8053 / NCTC 8594 / PA 3679), this protein is Cinnamate reductase.